The chain runs to 309 residues: RHOMBOID-like protein 5 (309 aa).

7 helical membrane passes run 27–47 (IPVPWVAWLVPLILAANFVTF), 113–133 (IWLHGGFLHLMANMISLMCIG), 140–160 (FGFMRIGALYVISGLGGSLVS), 170–190 (VSVGASGALFGLLGAMLSELI), 200–220 (CTALMTLILIIVLNLSVGFLP), 222–242 (VDNSAHFGGFLAGFFLGFVLL), and 274–294 (IFRFTSLAILLAGFIAGYTKL). The Nucleophile role is filled by serine 175. Residue histidine 227 is the Charge relay system of the active site.

It belongs to the peptidase S54 family.

Its subcellular location is the membrane. The catalysed reaction is Cleaves type-1 transmembrane domains using a catalytic dyad composed of serine and histidine that are contributed by different transmembrane domains.. Functionally, probable rhomboid-type serine protease that catalyzes intramembrane proteolysis. May function in reproductive organs maturation. The polypeptide is RHOMBOID-like protein 5 (Arabidopsis thaliana (Mouse-ear cress)).